The sequence spans 414 residues: Serine hydroxymethyltransferase (414 aa).

(6S)-5,6,7,8-tetrahydrofolate is bound by residues Leu-118 and 122–124 (GHL). Lys-227 bears the N6-(pyridoxal phosphate)lysine mark. (6S)-5,6,7,8-tetrahydrofolate contacts are provided by residues Glu-240 and 350-352 (SPF).

Belongs to the SHMT family. Homodimer. Pyridoxal 5'-phosphate is required as a cofactor.

It localises to the cytoplasm. It catalyses the reaction (6R)-5,10-methylene-5,6,7,8-tetrahydrofolate + glycine + H2O = (6S)-5,6,7,8-tetrahydrofolate + L-serine. The protein operates within one-carbon metabolism; tetrahydrofolate interconversion. It participates in amino-acid biosynthesis; glycine biosynthesis; glycine from L-serine: step 1/1. Its function is as follows. Catalyzes the reversible interconversion of serine and glycine with tetrahydrofolate (THF) serving as the one-carbon carrier. This reaction serves as the major source of one-carbon groups required for the biosynthesis of purines, thymidylate, methionine, and other important biomolecules. Also exhibits THF-independent aldolase activity toward beta-hydroxyamino acids, producing glycine and aldehydes, via a retro-aldol mechanism. In Bacillus thuringiensis (strain Al Hakam), this protein is Serine hydroxymethyltransferase.